The primary structure comprises 666 residues: Probable potassium transport system protein Kup (666 aa).

Helical transmembrane passes span 16 to 36 (GFIIALGIVYGDIGTSPLYTM), 58 to 78 (ISLIIWTLTLITTIKYVLIAL), 100 to 120 (PWLIIPAMIGGATLLSDGALT), 141 to 161 (IYQNQTNIIITTLVILIVLFG), 165 to 185 (FGTGFIGKIFGPVMFIWFSFL), 221 to 241 (IFILGSIFLATTGAEALYSDL), 253 to 273 (WPFVKMCIVWSYCGQAAWILA), 294 to 314 (VYLVSLATLAAIIASQALISG), 343 to 363 (LYIPVINWILFAVTSCTVLAF), 373 to 393 (YGLAITITMLMTTILLKYYLI), 399 to 419 (PILAHLAMAFFALVEFIFFLA), and 424 to 444 (FMHGGYAVVILALAIVFVMFI).

Belongs to the HAK/KUP transporter (TC 2.A.72) family.

The protein resides in the cell membrane. It catalyses the reaction K(+)(in) + H(+)(in) = K(+)(out) + H(+)(out). Transport of potassium into the cell. Likely operates as a K(+):H(+) symporter. The sequence is that of Probable potassium transport system protein Kup from Streptococcus pyogenes serotype M4 (strain MGAS10750).